Here is a 465-residue protein sequence, read N- to C-terminus: Eukaryotic translation initiation factor 3 subunit M (465 aa).

The PCI domain maps to Glu-215–Tyr-383. Positions Ala-429 to Asp-465 are disordered. Basic and acidic residues-rich tracts occupy residues Ser-433–Arg-448 and Gly-455–Asp-465.

This sequence belongs to the eIF-3 subunit M family. Component of the eukaryotic translation initiation factor 3 (eIF-3) complex.

The protein localises to the cytoplasm. Its function is as follows. Component of the eukaryotic translation initiation factor 3 (eIF-3) complex, which is involved in protein synthesis of a specialized repertoire of mRNAs and, together with other initiation factors, stimulates binding of mRNA and methionyl-tRNAi to the 40S ribosome. The eIF-3 complex specifically targets and initiates translation of a subset of mRNAs involved in cell proliferation. This chain is Eukaryotic translation initiation factor 3 subunit M, found in Coccidioides immitis (strain RS) (Valley fever fungus).